The chain runs to 27 residues: Trypsin inhibitor 5 (27 aa).

3 disulfides stabilise this stretch: Cys1/Cys18, Cys8/Cys20, and Cys14/Cys26.

The protein resides in the secreted. Its function is as follows. Inhibits trypsin. In Sechium edule (Chayote), this protein is Trypsin inhibitor 5.